A 1342-amino-acid polypeptide reads, in one-letter code: Zinc finger protein 335 (1342 aa).

Disordered stretches follow at residues 1–102 (MEEN…VTGG) and 201–228 (TSTS…AEEP). Low complexity predominate over residues 34 to 49 (AVSADSSDAAAAPGQA). Polar residues predominate over residues 201-217 (TSTSTCLEAQGGPSSPV). A C2H2-type 1 zinc finger spans residues 245–268 (FKCKMCQYRSSTKATLLRHMRERH). The interval 274–442 (AAAAAAGKKG…TLPRRRGRPS (169 aa)) is disordered. Over residues 297 to 327 (EEGPEEEDDDDIVDAGAIDDLEEDSDYNPAE) the composition is skewed to acidic residues. Residues 346-357 (RPRRRPGRPRKL) show a composition bias toward basic residues. C2H2-type zinc fingers lie at residues 465–487 (FLCR…VNSH), 495–517 (FKCL…MFNH), 523–545 (YKCD…AAVH), 562–584 (FPCP…MKTH), 590–612 (HMCD…LLTH), 621–643 (FKCE…QLSH), 649–672 (FKCS…AVKH), and 678–701 (FACE…RCRH). Disordered regions lie at residues 732-763 (LKQQ…QSSE) and 964-1013 (CGGL…SAAT). The segment covering 740 to 753 (PGPPPSSPGPPEIP) has biased composition (pro residues). Phosphoserine occurs at positions 976, 992, and 1007. Residues 986–997 (SQSSASSPPATS) show a composition bias toward low complexity. C2H2-type zinc fingers lie at residues 1019–1041 (FSCK…KRAH), 1047–1069 (FKCP…MAQH), 1075–1097 (HQCS…MLTH), and 1103–1126 (FACH…QRLH). K1022 is covalently cross-linked (Glycyl lysine isopeptide (Lys-Gly) (interchain with G-Cter in SUMO2)). The tract at residues 1041 to 1342 (HAGPGAFKCP…EYDVITLADD (302 aa)) is involved in the interaction with CCAR2. The residue at position 1153 (S1153) is a Phosphoserine.

The protein belongs to the krueppel C2H2-type zinc-finger protein family. As to quaternary structure, interacts with NCOA6; may enhance ligand-dependent transcriptional activation by nuclear hormone receptors. Interacts with CNOT6. Interacts with CNOT9; the interaction is direct. Component of a nuclear receptor-mediated transcription complex composed of at least ZNF335, CCAR2 and EMSY; the complex stimulates the transcription of nuclear receptor target genes such as SOX9 and HOXA1. Within the complex interacts with EMSY and interacts (via C-terminus) with CCAR2. Interacts with members of histone H3'Lys4'(H3K4) methyltransferase complexes ASH2L, CXXC1, KMT2A/MLL1, RBBP5, SETD1A and WDR5. Component of a histone methylation complex composed of at least ZNF335, RBBP5, ASH2L and WDR5; the complex may have histone H3-specific methyltransferase activity, however does not have specificity for 'Lys-4' of histone H3. Interacts with RBBP5 and WDR5. Interacts with ASHL2. Components of this complex may associate with components of the ZNF335-CCAR2-EMSY nuclear receptor-mediated transcription complex to form a complex at least composed of ZNF335, HCFC1, CCAR2, EMSY, MKI67, RBBP5, ASH2L and WDR5. Within this complex also interacts with HCFC1 and MKI67. In terms of tissue distribution, ubiquitously expressed.

The protein localises to the nucleus. Its function is as follows. Component or associated component of some histone methyltransferase complexes may regulate transcription through recruitment of those complexes on gene promoters. Enhances ligand-dependent transcriptional activation by nuclear hormone receptors. Plays an important role in neural progenitor cell proliferation and self-renewal through the regulation of specific genes involved brain development, including REST. Also controls the expression of genes involved in somatic development and regulates, for instance, lymphoblast proliferation. The chain is Zinc finger protein 335 (ZNF335) from Homo sapiens (Human).